Consider the following 257-residue polypeptide: Protein KlaA (257 aa).

Functionally, belongs to the kla operon, which is associated with cryptic tellurite resistance, and IncW plasmid fertility inhibition. This chain is Protein KlaA (klaA), found in Escherichia coli.